The sequence spans 282 residues: Pantothenate synthetase (282 aa).

30–37 (MGYLHEGH) is a binding site for ATP. Catalysis depends on histidine 37, which acts as the Proton donor. Glutamine 61 provides a ligand contact to (R)-pantoate. Glutamine 61 contacts beta-alanine. 147-150 (GQKD) contributes to the ATP binding site. Glutamine 153 is a binding site for (R)-pantoate. ATP-binding positions include valine 176 and 184-187 (MSSR).

It belongs to the pantothenate synthetase family. In terms of assembly, homodimer.

The protein resides in the cytoplasm. It catalyses the reaction (R)-pantoate + beta-alanine + ATP = (R)-pantothenate + AMP + diphosphate + H(+). The protein operates within cofactor biosynthesis; (R)-pantothenate biosynthesis; (R)-pantothenate from (R)-pantoate and beta-alanine: step 1/1. Catalyzes the condensation of pantoate with beta-alanine in an ATP-dependent reaction via a pantoyl-adenylate intermediate. The protein is Pantothenate synthetase of Pelotomaculum thermopropionicum (strain DSM 13744 / JCM 10971 / SI).